A 351-amino-acid chain; its full sequence is S-adenosylmethionine:tRNA ribosyltransferase-isomerase (351 aa).

Belongs to the QueA family. As to quaternary structure, monomer.

The protein localises to the cytoplasm. It carries out the reaction 7-aminomethyl-7-carbaguanosine(34) in tRNA + S-adenosyl-L-methionine = epoxyqueuosine(34) in tRNA + adenine + L-methionine + 2 H(+). It participates in tRNA modification; tRNA-queuosine biosynthesis. In terms of biological role, transfers and isomerizes the ribose moiety from AdoMet to the 7-aminomethyl group of 7-deazaguanine (preQ1-tRNA) to give epoxyqueuosine (oQ-tRNA). This is S-adenosylmethionine:tRNA ribosyltransferase-isomerase from Hydrogenovibrio crunogenus (strain DSM 25203 / XCL-2) (Thiomicrospira crunogena).